The following is a 517-amino-acid chain: Serine O-succinyltransferase (517 aa).

A mitochondrion-targeting transit peptide spans Met-1 to Arg-46. Polar residues predominate over residues Ser-36 to Ala-64. A disordered region spans residues Ser-36–Ser-66. Residues Asn-134–Gln-386 form the AB hydrolase-1 domain. An important for substrate specificity region spans residues Gly-141–Ala-144. Residue Ser-238 is the Nucleophile of the active site. Arg-307 is a substrate binding site. A disordered region spans residues Gln-413–Ser-436. The span at Gln-416–Ser-436 shows a compositional bias: low complexity. Active-site residues include Asp-461 and His-498. Substrate is bound at residue Asp-499.

It belongs to the AB hydrolase superfamily. MetX family.

The protein resides in the mitochondrion. The enzyme catalyses succinyl-CoA + L-serine = O-succinyl-L-serine + CoA. The protein operates within amino-acid biosynthesis; L-cysteine biosynthesis; L-cysteine from L-serine: step 1/2. Transfers a succinyl group from succinyl-CoA to L-serine, forming succinyl-L-serine. Also has weak serine acetyl transferase activity and homoserine succinyl transferase activity. This is Serine O-succinyltransferase from Emericella nidulans (strain FGSC A4 / ATCC 38163 / CBS 112.46 / NRRL 194 / M139) (Aspergillus nidulans).